Here is a 284-residue protein sequence, read N- to C-terminus: T-cell leukemia homeobox protein 2 (284 aa).

3 disordered regions span residues 1 to 50, 78 to 106, and 139 to 166; these read MEPG…NGAF, GGVI…GPSG, and FSGT…SFSR. A compositionally biased stretch (gly residues) spans 30-50; the sequence is TPGGGLGLGRGGQGHGENGAF. The segment covering 87 to 96 has biased composition (pro residues); sequence RPLPVPPPAG. A DNA-binding region (homeobox) is located at residues 157-216; it reads RKKPRTSFSRSQVLELERRFLRQKYLASAERAALAKALRMTDAQVKTWFQNRRTKWRRQT.

It localises to the nucleus. In terms of biological role, transcription activator that binds DNA elements with the consensus sequence 5'-CGGTAATTGG-3'. Binds DNA via its homeobox. Required for normal cell death of enteric neurons in the gastrointestinal tract. Required for normal development of the enteric nervous system, and for proper development of normal motility of the gastrointestinal tract. The sequence is that of T-cell leukemia homeobox protein 2 (TLX2) from Homo sapiens (Human).